Consider the following 210-residue polypeptide: Glycerol-3-phosphate acyltransferase (210 aa).

The next 5 membrane-spanning stretches (helical) occupy residues 4-24 (LIVAVVAYLIGSVSFAVIVSA), 52-72 (AAILTLIGDAFKGWLAVWLTG), 82-102 (DTSVAIAAIAVFLGHLYPVFF), 118-138 (LAINPILGIATLLTWLIVAFF), and 159-179 (FLFGANVIALSIVAMSALLIW).

The protein belongs to the PlsY family. In terms of assembly, probably interacts with PlsX.

The protein resides in the cell inner membrane. It catalyses the reaction an acyl phosphate + sn-glycerol 3-phosphate = a 1-acyl-sn-glycero-3-phosphate + phosphate. The protein operates within lipid metabolism; phospholipid metabolism. Functionally, catalyzes the transfer of an acyl group from acyl-phosphate (acyl-PO(4)) to glycerol-3-phosphate (G3P) to form lysophosphatidic acid (LPA). This enzyme utilizes acyl-phosphate as fatty acyl donor, but not acyl-CoA or acyl-ACP. This Paraburkholderia phymatum (strain DSM 17167 / CIP 108236 / LMG 21445 / STM815) (Burkholderia phymatum) protein is Glycerol-3-phosphate acyltransferase.